A 223-amino-acid polypeptide reads, in one-letter code: Type III pantothenate kinase (223 aa).

17-24 serves as a coordination point for ATP; the sequence is DIGNTHIH. Substrate is bound by residues Tyr-81 and 85-88; that span reads GIDR. The active-site Proton acceptor is Asp-87. Position 102 (Asp-102) interacts with K(+). Position 105 (Ser-105) interacts with ATP. A substrate-binding site is contributed by Thr-157.

It belongs to the type III pantothenate kinase family. In terms of assembly, homodimer. It depends on NH4(+) as a cofactor. K(+) is required as a cofactor.

The protein localises to the cytoplasm. The catalysed reaction is (R)-pantothenate + ATP = (R)-4'-phosphopantothenate + ADP + H(+). It functions in the pathway cofactor biosynthesis; coenzyme A biosynthesis; CoA from (R)-pantothenate: step 1/5. Its function is as follows. Catalyzes the phosphorylation of pantothenate (Pan), the first step in CoA biosynthesis. This Helicobacter pylori (strain HPAG1) protein is Type III pantothenate kinase.